Reading from the N-terminus, the 456-residue chain is N(6)-adenosine-methyltransferase non-catalytic subunit METTL14 (456 aa).

Positions 50–75 (TCRASYDTSAPNAKRKYLDEGETDED) are disordered. Interaction with METTL3 stretches follow at residues 135-136 (RD) and 237-238 (SG). A positively charged region required for RNA-binding region spans residues 245 to 254 (RVCLRKWGYR). Interaction with METTL3 regions lie at residues 255-258 (RCED) and 278-287 (KAVFQRTKEH). Positions 297 to 298 (KR) are positively charged region required for RNA-binding. Residues 308 to 312 (NVDID) are interaction with METTL3. Positions 393–456 (ERLRPKSPPP…GAHRGGFPPR (64 aa)) are disordered. Serine 399 is subject to Phosphoserine. A compositionally biased stretch (gly residues) spans 409–423 (GGGAPRGGGRGGTSA). The segment covering 425-440 (RGRERNRSNFRGERGG) has biased composition (basic and acidic residues). The span at 441–450 (FRGGRGGAHR) shows a compositional bias: gly residues.

Belongs to the MT-A70-like family. In terms of assembly, heterodimer; heterodimerizes with METTL3 to form an antiparallel heterodimer that constitutes an active methyltransferase. Component of the WMM complex, a N6-methyltransferase complex composed of a catalytic subcomplex, named MAC, and of an associated subcomplex, named MACOM. The MAC subcomplex is composed of METTL3 and METTL14. The MACOM subcomplex is composed of WTAP, ZC3H13, CBLL1/HAKAI, VIRMA, and, in some cases of RBM15 (RBM15 or RBM15B).

It localises to the nucleus. In terms of biological role, the METTL3-METTL14 heterodimer forms a N6-methyltransferase complex that methylates adenosine residues at the N(6) position of some mRNAs and regulates the circadian clock, differentiation of embryonic stem cells and cortical neurogenesis. In the heterodimer formed with METTL3, METTL14 constitutes the RNA-binding scaffold that recognizes the substrate rather than the catalytic core. N6-methyladenosine (m6A), which takes place at the 5'-[AG]GAC-3' consensus sites of some mRNAs, plays a role in mRNA stability and processing. M6A acts as a key regulator of mRNA stability by promoting mRNA destabilization and degradation. In embryonic stem cells (ESCs), m6A methylation of mRNAs encoding key naive pluripotency-promoting transcripts results in transcript destabilization. M6A regulates spermatogonial differentiation and meiosis and is essential for male fertility and spermatogenesis. M6A also regulates cortical neurogenesis: m6A methylation of transcripts related to transcription factors, neural stem cells, the cell cycle and neuronal differentiation during brain development promotes their destabilization and decay, promoting differentiation of radial glial cells. In Homo sapiens (Human), this protein is N(6)-adenosine-methyltransferase non-catalytic subunit METTL14.